We begin with the raw amino-acid sequence, 632 residues long: Probable potassium transport system protein Kup 3 (632 aa).

12 helical membrane-spanning segments follow: residues 17–37, 60–80, 106–126, 144–164, 175–195, 210–230, 254–274, 292–312, 344–364, 370–390, 401–421, and 426–446; these read LFYL…TSPL, LISL…VLFL, TAIL…DAMI, PSLS…LFVV, FFGP…ISHI, AVSF…AVFL, WFLL…ALVL, ALLP…QAVI, IFVP…VLSF, LATA…IMAF, LPLA…FLGA, and IHDG…IMWT.

Belongs to the HAK/KUP transporter (TC 2.A.72) family.

It localises to the cell inner membrane. It carries out the reaction K(+)(in) + H(+)(in) = K(+)(out) + H(+)(out). Transport of potassium into the cell. Likely operates as a K(+):H(+) symporter. This Rhizobium etli (strain ATCC 51251 / DSM 11541 / JCM 21823 / NBRC 15573 / CFN 42) protein is Probable potassium transport system protein Kup 3.